The following is a 329-amino-acid chain: UDP-N-acetylenolpyruvoylglucosamine reductase (329 aa).

The region spanning 28-192 (RVGGPADLLC…ARVEVRLHPG (165 aa)) is the FAD-binding PCMH-type domain. Arg-172 is a catalytic residue. Residue Ser-221 is the Proton donor of the active site. Glu-291 is an active-site residue. The disordered stretch occupies residues 307–329 (DGHAAAGGGPGAASGGVRPPEAT). Gly residues predominate over residues 311–320 (AAGGGPGAAS).

It belongs to the MurB family. The cofactor is FAD.

The protein localises to the cytoplasm. The enzyme catalyses UDP-N-acetyl-alpha-D-muramate + NADP(+) = UDP-N-acetyl-3-O-(1-carboxyvinyl)-alpha-D-glucosamine + NADPH + H(+). The protein operates within cell wall biogenesis; peptidoglycan biosynthesis. In terms of biological role, cell wall formation. The polypeptide is UDP-N-acetylenolpyruvoylglucosamine reductase (Anaeromyxobacter dehalogenans (strain 2CP-1 / ATCC BAA-258)).